A 268-amino-acid chain; its full sequence is MADQSIISALVLGLIEGLTEFIPVSSTAHVLLAGHFLGFKSPGNTFAVLIQLGAILAILLVYFQKLLSIALALPTSVKARRFVFSVLIAFLPAALIGAAAHGFIKAVLFETPMLICVVLIVGGVILYAIDRLPLQPRYTDVFDYPPSLALKIGLFQCLAMIPGTSRSGATIAGALLMGTDKRSAAEFSFFLAMPTMLGAFTLDLYKNRDALSFDDIGVIAIGFIAAFVAGIVVVRSLLDFVSHRGFTPFAIWRIVVGTAGLVGLWLVG.

A run of 7 helical transmembrane segments spans residues 5-25, 43-63, 84-104, 106-126, 184-204, 213-233, and 248-268; these read SIISALVLGLIEGLTEFIPVS, GNTFAVLIQLGAILAILLVYF, FSVLIAFLPAALIGAAAHGFI, AVLFETPMLICVVLIVGGVIL, AAEFSFFLAMPTMLGAFTLDL, FDDIGVIAIGFIAAFVAGIVV, and PFAIWRIVVGTAGLVGLWLVG.

The protein belongs to the UppP family.

It localises to the cell inner membrane. The catalysed reaction is di-trans,octa-cis-undecaprenyl diphosphate + H2O = di-trans,octa-cis-undecaprenyl phosphate + phosphate + H(+). Its function is as follows. Catalyzes the dephosphorylation of undecaprenyl diphosphate (UPP). Confers resistance to bacitracin. The polypeptide is Undecaprenyl-diphosphatase (Sinorhizobium fredii (strain NBRC 101917 / NGR234)).